The sequence spans 700 residues: non-specific serine/threonine protein kinase Cdc7 (700 aa).

The 518-residue stretch at 127-644 (FDVHSRIGNG…AEEALKHPFF (518 aa)) folds into the Protein kinase domain. ATP-binding positions include 133–141 (IGNGTFSTV) and K163. The active-site Proton acceptor is D250.

Belongs to the protein kinase superfamily. Ser/Thr protein kinase family. As to quaternary structure, component of the Dbf4-dependent kinase (DDK) complex consisting of Cdc7 and the Dbf4 ortholog chif. Interacts with chif (via the processed polypeptide Chiffon-A); the interaction is direct.

The catalysed reaction is L-seryl-[protein] + ATP = O-phospho-L-seryl-[protein] + ADP + H(+). It carries out the reaction L-threonyl-[protein] + ATP = O-phospho-L-threonyl-[protein] + ADP + H(+). Its activity is regulated as follows. Activated by chif. Inhibited by the synthetic compound XL413. Catalytic component of the Dbf4-dependent kinase (DDK) complex. Phosphorylates components of the pre-replication complex, including Mcm2 and, to a lesser extent, Mcm4. Phosphorylates histones, including H3 and H2B. Required for DNA replication and mitotic proliferation, including during the endoreplication and amplification stages of DNA replication in egg chamber follicle cells of the ovary. This is non-specific serine/threonine protein kinase Cdc7 from Drosophila melanogaster (Fruit fly).